Consider the following 288-residue polypeptide: Alpha-acetolactate decarboxylase (288 aa).

The first 23 residues, 1–23 (MNIKYFLIFLILLAVTSFTLFSG), serve as a signal peptide directing secretion.

Belongs to the alpha-acetolactate decarboxylase family.

The catalysed reaction is (2S)-2-acetolactate + H(+) = (R)-acetoin + CO2. Its pathway is polyol metabolism; (R,R)-butane-2,3-diol biosynthesis; (R,R)-butane-2,3-diol from pyruvate: step 2/3. Functionally, converts acetolactate into acetoin. This chain is Alpha-acetolactate decarboxylase, found in Methanosarcina mazei (strain ATCC BAA-159 / DSM 3647 / Goe1 / Go1 / JCM 11833 / OCM 88) (Methanosarcina frisia).